A 439-amino-acid polypeptide reads, in one-letter code: Xylose isomerase (439 aa).

Catalysis depends on residues H103 and D106. Residues E234, E270, H273, D298, D309, D311, and D341 each coordinate Mg(2+).

The protein belongs to the xylose isomerase family. Homotetramer. Mg(2+) is required as a cofactor.

It localises to the cytoplasm. The catalysed reaction is alpha-D-xylose = alpha-D-xylulofuranose. This Bacteroides fragilis (strain YCH46) protein is Xylose isomerase.